A 385-amino-acid chain; its full sequence is Alanine racemase (385 aa).

Lysine 40 (proton acceptor; specific for D-alanine) is an active-site residue. At lysine 40 the chain carries N6-(pyridoxal phosphate)lysine. Position 139 (arginine 139) interacts with substrate. Catalysis depends on tyrosine 268, which acts as the Proton acceptor; specific for L-alanine. Methionine 315 lines the substrate pocket.

This sequence belongs to the alanine racemase family. Requires pyridoxal 5'-phosphate as cofactor.

The catalysed reaction is L-alanine = D-alanine. The protein operates within amino-acid biosynthesis; D-alanine biosynthesis; D-alanine from L-alanine: step 1/1. Catalyzes the interconversion of L-alanine and D-alanine. May also act on other amino acids. The sequence is that of Alanine racemase (alr) from Anoxybacillus flavithermus (strain DSM 21510 / WK1).